A 382-amino-acid polypeptide reads, in one-letter code: S-adenosylmethionine synthase (382 aa).

His-16 serves as a coordination point for ATP. Asp-18 contacts Mg(2+). Glu-44 provides a ligand contact to K(+). The L-methionine site is built by Glu-57 and Gln-100. The tract at residues 100 to 110 (QSPDIAQGVDN) is flexible loop. ATP contacts are provided by residues 165 to 167 (DAK), 231 to 232 (RF), Asp-240, 246 to 247 (RK), and Lys-267. Asp-240 contacts L-methionine. Lys-271 contacts L-methionine.

This sequence belongs to the AdoMet synthase family. In terms of assembly, homotetramer; dimer of dimers. Mg(2+) serves as cofactor. Requires K(+) as cofactor.

It is found in the cytoplasm. It carries out the reaction L-methionine + ATP + H2O = S-adenosyl-L-methionine + phosphate + diphosphate. Its pathway is amino-acid biosynthesis; S-adenosyl-L-methionine biosynthesis; S-adenosyl-L-methionine from L-methionine: step 1/1. In terms of biological role, catalyzes the formation of S-adenosylmethionine (AdoMet) from methionine and ATP. The overall synthetic reaction is composed of two sequential steps, AdoMet formation and the subsequent tripolyphosphate hydrolysis which occurs prior to release of AdoMet from the enzyme. This chain is S-adenosylmethionine synthase, found in Legionella pneumophila (strain Paris).